Reading from the N-terminus, the 753-residue chain is Putative cyclic nucleotide-gated ion channel 8 (753 aa).

Residues 1–111 (MYKSQYISGH…DKTLLLWNRM (111 aa)) lie on the Cytoplasmic side of the membrane. Residues 112-132 (FVISCILAVSVDPLFFYLPIV) form a helical membrane-spanning segment. Residues 133–145 (DNSKNCIGIDSKL) are Extracellular-facing. The chain crosses the membrane as a helical span at residues 146–166 (AVTTTTLRTIIDVFYLTRMAL). Residues 167–199 (QFRTAYIAPSSRVFGRGELVIDPAKIAERYLTR) are Cytoplasmic-facing. A helical membrane pass occupies residues 200-220 (YFIVDFLAVLPLPQIAVWKFL). Residues 221–233 (HGSKGTDVLPTKQ) lie on the Extracellular side of the membrane. A helical transmembrane segment spans residues 234–254 (ALLHIVITQYIPRFVRFIPLT). Residues 255-274 (SELKKTAGAFAEGAWAGAAY) are Cytoplasmic-facing. A helical membrane pass occupies residues 275–295 (YLLWYMLASHITGAFWYMLSV). Topologically, residues 296-402 (ERNDTCLRSA…QGLQTSTYPG (107 aa)) are extracellular. A helical transmembrane segment spans residues 403–423 (EVLFSIAIAVAGLLLFALLIG). Topologically, residues 424–753 (NMQTYLQSLT…FEALDTDDLN (330 aa)) are cytoplasmic. A nucleoside 3',5'-cyclic phosphate-binding positions include 508–638 (LFAN…TFRF) and glutamate 579. The interval 624-639 (FRRLHSRQVQQTFRFY) is calmodulin-binding. The IQ domain maps to 644 to 673 (RTWAACFIQAAWRRHLRRKIAELRRKEEEE). The tract at residues 731–753 (KSLMNLTKPSEPDFEALDTDDLN) is disordered. Residues 742–753 (PDFEALDTDDLN) show a composition bias toward acidic residues.

The protein belongs to the cyclic nucleotide-gated cation channel (TC 1.A.1.5) family. As to quaternary structure, homotetramer or heterotetramer.

Its subcellular location is the cell membrane. In terms of biological role, putative cyclic nucleotide-gated ion channel. The protein is Putative cyclic nucleotide-gated ion channel 8 (CNGC8) of Arabidopsis thaliana (Mouse-ear cress).